The chain runs to 237 residues: Uracil-DNA glycosylase (237 aa).

The Proton acceptor role is filled by aspartate 77.

It belongs to the uracil-DNA glycosylase (UDG) superfamily. UNG family.

The protein localises to the cytoplasm. It carries out the reaction Hydrolyzes single-stranded DNA or mismatched double-stranded DNA and polynucleotides, releasing free uracil.. In terms of biological role, excises uracil residues from the DNA which can arise as a result of misincorporation of dUMP residues by DNA polymerase or due to deamination of cytosine. The polypeptide is Uracil-DNA glycosylase (Acinetobacter baumannii (strain AB307-0294)).